Consider the following 129-residue polypeptide: Large ribosomal subunit protein bL12 (129 aa).

This sequence belongs to the bacterial ribosomal protein bL12 family. As to quaternary structure, homodimer. Part of the ribosomal stalk of the 50S ribosomal subunit. Forms a multimeric L10(L12)X complex, where L10 forms an elongated spine to which 2 to 4 L12 dimers bind in a sequential fashion. Binds GTP-bound translation factors.

Forms part of the ribosomal stalk which helps the ribosome interact with GTP-bound translation factors. Is thus essential for accurate translation. This chain is Large ribosomal subunit protein bL12, found in Micrococcus luteus (strain ATCC 4698 / DSM 20030 / JCM 1464 / CCM 169 / CCUG 5858 / IAM 1056 / NBRC 3333 / NCIMB 9278 / NCTC 2665 / VKM Ac-2230) (Micrococcus lysodeikticus).